We begin with the raw amino-acid sequence, 124 residues long: Fluoride-specific ion channel FluC 1 (124 aa).

4 helical membrane-spanning segments follow: residues 4 to 24 (VLIG…GAWI), 36 to 56 (GTFA…GLVV), 67 to 87 (VVLG…LLDL), and 103 to 123 (AALS…LGWG). Na(+) contacts are provided by Gly75 and Thr78.

The protein belongs to the fluoride channel Fluc/FEX (TC 1.A.43) family.

The protein resides in the cell membrane. The enzyme catalyses fluoride(in) = fluoride(out). Na(+) is not transported, but it plays an essential structural role and its presence is essential for fluoride channel function. Fluoride-specific ion channel. Important for reducing fluoride concentration in the cell, thus reducing its toxicity. This is Fluoride-specific ion channel FluC 1 from Symbiobacterium thermophilum (strain DSM 24528 / JCM 14929 / IAM 14863 / T).